The primary structure comprises 430 residues: Tyrosine--tRNA ligase (430 aa).

Y36 contacts L-tyrosine. Residues 41–50 (PTASSLHVGS) carry the 'HIGH' region motif. Positions 170 and 174 each coordinate L-tyrosine. Residues 230-234 (KMGKT) carry the 'KMSKS' region motif. K233 is a binding site for ATP. Residues 362–427 (VPAFELFDEI…GKKNYHRLVL (66 aa)) form the S4 RNA-binding domain.

The protein belongs to the class-I aminoacyl-tRNA synthetase family. TyrS type 1 subfamily. Homodimer.

The protein resides in the cytoplasm. The catalysed reaction is tRNA(Tyr) + L-tyrosine + ATP = L-tyrosyl-tRNA(Tyr) + AMP + diphosphate + H(+). Catalyzes the attachment of tyrosine to tRNA(Tyr) in a two-step reaction: tyrosine is first activated by ATP to form Tyr-AMP and then transferred to the acceptor end of tRNA(Tyr). This Desulfatibacillum aliphaticivorans protein is Tyrosine--tRNA ligase.